A 195-amino-acid chain; its full sequence is Chromophore lyase CpcT/CpeT 2 (195 aa).

Belongs to the CpcT/CpeT biliprotein lyase family.

In terms of biological role, covalently attaches a chromophore to Cys residue(s) of phycobiliproteins. This is Chromophore lyase CpcT/CpeT 2 from Trichodesmium erythraeum (strain IMS101).